Here is a 241-residue protein sequence, read N- to C-terminus: Thiamine import ATP-binding protein ThiQ (241 aa).

Residues 7 to 235 enclose the ABC transporter domain; that stretch reads IRLSDVRFSY…AGPEALRHYI (229 aa). An ATP-binding site is contributed by 37–44; that stretch reads GPSGSGKS.

Belongs to the ABC transporter superfamily. Thiamine importer (TC 3.A.1.19.1) family. The complex is composed of two ATP-binding proteins (ThiQ), two transmembrane proteins (ThiP) and a solute-binding protein (ThiB).

Its subcellular location is the cell inner membrane. It catalyses the reaction thiamine(out) + ATP + H2O = thiamine(in) + ADP + phosphate + H(+). In terms of biological role, part of the ABC transporter complex ThiBPQ involved in thiamine import. Responsible for energy coupling to the transport system. This chain is Thiamine import ATP-binding protein ThiQ, found in Brucella abortus biovar 1 (strain 9-941).